Reading from the N-terminus, the 350-residue chain is Ornithine carbamoyltransferase, mitochondrial (350 aa).

A mitochondrion-targeting transit peptide spans 1-30; it reads MLHHMRTIINASWRYGNKCIVRQFGFSQTY. Residues 86–90, arginine 137, and histidine 164 each bind carbamoyl phosphate; that span reads STRTR. Arginine 137 contacts L-ornithine. Residues asparagine 195, 259–263, 298–301, and arginine 326 each bind L-ornithine; these read DTWVS and HCLP. The active site involves cysteine 299. Arginine 326 contacts carbamoyl phosphate.

The protein belongs to the aspartate/ornithine carbamoyltransferase superfamily. OTCase family. Homotrimer. As to expression, liver.

Its subcellular location is the mitochondrion matrix. It catalyses the reaction carbamoyl phosphate + L-ornithine = L-citrulline + phosphate + H(+). It functions in the pathway nitrogen metabolism; urea cycle; L-citrulline from L-ornithine and carbamoyl phosphate: step 1/1. OTC is necessary for the tadpoles transition from an ammonotelic, aquatic larva to a ureotelic, terrestrial adult. The polypeptide is Ornithine carbamoyltransferase, mitochondrial (Aquarana catesbeiana (American bullfrog)).